We begin with the raw amino-acid sequence, 371 residues long: Neuropeptide S receptor (371 aa).

Over residues 1 to 21 (MPANFTEGSFDSSGTGQTLDS) the composition is skewed to polar residues. Residues 1–22 (MPANFTEGSFDSSGTGQTLDSS) are disordered. The Extracellular portion of the chain corresponds to 1-52 (MPANFTEGSFDSSGTGQTLDSSPVACTETVTFTEVVEGKEWGSFYYSFKTEQ). An N-linked (GlcNAc...) asparagine glycan is attached at N4. The helical transmembrane segment at 53–73 (LITLWVLFVFTIVGNSVVLFS) threads the bilayer. The Cytoplasmic segment spans residues 74–82 (TWRRKKKSR). Residues 83 to 103 (MTFFVTQLAITDSFTGLVNIL) traverse the membrane as a helical segment. Residues 104–123 (TDINWRFTGDFTAPDLVCRV) lie on the Extracellular side of the membrane. A disulfide bond links C121 and C197. Residues 124-144 (VRYLQVVLLYASTYVLVSLSI) form a helical membrane-spanning segment. The Cytoplasmic segment spans residues 145–164 (DRYHAIVYPMKFLQGEKQAR). A helical membrane pass occupies residues 165-185 (VLIVIAWSLSFLFSIPTLIIF). Residues 186–212 (GKRTLSNGEVQCWALWPDDSYWTPYMT) are Extracellular-facing. A helical membrane pass occupies residues 213–233 (IVAFLVYFIPLTIISIMYGIV). Residues 234 to 275 (IRTIWIKSKTYETVISNCSDGKLCSSYNRGLISKAKIKAIKY) lie on the Cytoplasmic side of the membrane. A helical transmembrane segment spans residues 276–296 (SIIIILAFICCWSPYFLFDIL). At 297 to 312 (DNFNLLPDTQERFYAS) the chain is on the extracellular side. Residues 313 to 333 (VIIQNLPALNSAINPLIYCVF) traverse the membrane as a helical segment. Residues 334–371 (SSSISFPCREQRSQDSRMTFRERTERHEMQILSKPEFI) lie on the Cytoplasmic side of the membrane.

Belongs to the G-protein coupled receptor 1 family. Vasopressin/oxytocin receptor subfamily. As to expression, isoform 4 is ubiquitous; it is detected in glandular epithelia of bronchus, stomach, small intestine, colon, uterus, esophagus, spleen, kidney, pancreas, prostate and breast. Isoform 1 is detected in uterus, colon and prostate, and in the smooth muscle cell layer in bronchial and arterial walls (at protein level). Isoform 1 is predominantly expressed in smooth muscle. Isoform 4 is predominantly expressed in epithelial cells. In bronchial biopsies, it is expressed in smooth muscle cells of asthma patients, but not in control patients; whereas in epithelial cells, its expression is consistently stronger in asthma patients.

It localises to the cell membrane. The protein resides in the cytoplasm. In terms of biological role, G-protein coupled receptor for neuropeptide S (NPS). Promotes mobilization of intracellular Ca(2+) stores. Inhibits cell growth in response to NPS binding. Involved in pathogenesis of asthma and other IgE-mediated diseases. This is Neuropeptide S receptor (NPSR1) from Homo sapiens (Human).